Reading from the N-terminus, the 371-residue chain is Queuine tRNA-ribosyltransferase (371 aa).

The active-site Proton acceptor is the D93. Substrate contacts are provided by residues 93–97, D147, Q191, and G218; that span reads DSGGF. Residues 249–255 are RNA binding; the sequence is GVGTVVD. D268 functions as the Nucleophile in the catalytic mechanism. The segment at 273–277 is RNA binding; important for wobble base 34 recognition; sequence TRNAR. 4 residues coordinate Zn(2+): C306, C308, C311, and H337.

It belongs to the queuine tRNA-ribosyltransferase family. As to quaternary structure, homodimer. Within each dimer, one monomer is responsible for RNA recognition and catalysis, while the other monomer binds to the replacement base PreQ1. Zn(2+) serves as cofactor.

The catalysed reaction is 7-aminomethyl-7-carbaguanine + guanosine(34) in tRNA = 7-aminomethyl-7-carbaguanosine(34) in tRNA + guanine. Its pathway is tRNA modification; tRNA-queuosine biosynthesis. Catalyzes the base-exchange of a guanine (G) residue with the queuine precursor 7-aminomethyl-7-deazaguanine (PreQ1) at position 34 (anticodon wobble position) in tRNAs with GU(N) anticodons (tRNA-Asp, -Asn, -His and -Tyr). Catalysis occurs through a double-displacement mechanism. The nucleophile active site attacks the C1' of nucleotide 34 to detach the guanine base from the RNA, forming a covalent enzyme-RNA intermediate. The proton acceptor active site deprotonates the incoming PreQ1, allowing a nucleophilic attack on the C1' of the ribose to form the product. After dissociation, two additional enzymatic reactions on the tRNA convert PreQ1 to queuine (Q), resulting in the hypermodified nucleoside queuosine (7-(((4,5-cis-dihydroxy-2-cyclopenten-1-yl)amino)methyl)-7-deazaguanosine). The chain is Queuine tRNA-ribosyltransferase from Leptospira biflexa serovar Patoc (strain Patoc 1 / Ames).